Reading from the N-terminus, the 451-residue chain is Tryptophan--tRNA ligase (451 aa).

ATP is bound by residues 10–12 (TTT) and 18–19 (GN). The short motif at 11–19 (TTGTPHLGN) is the 'HIGH' region element. Asp-143 lines the L-tryptophan pocket. Residues 155-157 (GRD), Leu-195, and 202-206 (KMSKS) each bind ATP. The 'KMSKS' region motif lies at 202–206 (KMSKS).

It belongs to the class-I aminoacyl-tRNA synthetase family. In terms of assembly, homodimer.

Its subcellular location is the cytoplasm. The enzyme catalyses tRNA(Trp) + L-tryptophan + ATP = L-tryptophyl-tRNA(Trp) + AMP + diphosphate + H(+). Catalyzes the attachment of tryptophan to tRNA(Trp). The protein is Tryptophan--tRNA ligase of Bordetella bronchiseptica (strain ATCC BAA-588 / NCTC 13252 / RB50) (Alcaligenes bronchisepticus).